Consider the following 381-residue polypeptide: Succinyl-diaminopimelate desuccinylase (381 aa).

H69 is a binding site for Zn(2+). D71 is an active-site residue. D103 is a binding site for Zn(2+). Residue E137 is the Proton acceptor of the active site. E138, E166, and H355 together coordinate Zn(2+).

The protein belongs to the peptidase M20A family. DapE subfamily. As to quaternary structure, homodimer. Zn(2+) is required as a cofactor. The cofactor is Co(2+).

The enzyme catalyses N-succinyl-(2S,6S)-2,6-diaminopimelate + H2O = (2S,6S)-2,6-diaminopimelate + succinate. Its pathway is amino-acid biosynthesis; L-lysine biosynthesis via DAP pathway; LL-2,6-diaminopimelate from (S)-tetrahydrodipicolinate (succinylase route): step 3/3. In terms of biological role, catalyzes the hydrolysis of N-succinyl-L,L-diaminopimelic acid (SDAP), forming succinate and LL-2,6-diaminopimelate (DAP), an intermediate involved in the bacterial biosynthesis of lysine and meso-diaminopimelic acid, an essential component of bacterial cell walls. This is Succinyl-diaminopimelate desuccinylase from Rickettsia massiliae (strain Mtu5).